The chain runs to 461 residues: Adenosylmethionine-8-amino-7-oxononanoate aminotransferase (461 aa).

Glycine 117–alanine 118 provides a ligand contact to pyridoxal 5'-phosphate. Substrate is bound at residue tyrosine 150. Residue aspartate 263 coordinates pyridoxal 5'-phosphate. Residues lysine 296, glycine 331, and arginine 426 each coordinate substrate. Residue lysine 296 is modified to N6-(pyridoxal phosphate)lysine.

This sequence belongs to the class-III pyridoxal-phosphate-dependent aminotransferase family. BioA subfamily. In terms of assembly, homodimer. The cofactor is pyridoxal 5'-phosphate.

The protein localises to the cytoplasm. It catalyses the reaction (8S)-8-amino-7-oxononanoate + S-adenosyl-L-methionine = S-adenosyl-4-methylsulfanyl-2-oxobutanoate + (7R,8S)-7,8-diammoniononanoate. It functions in the pathway cofactor biosynthesis; biotin biosynthesis; 7,8-diaminononanoate from 8-amino-7-oxononanoate (SAM route): step 1/1. In terms of biological role, catalyzes the transfer of the alpha-amino group from S-adenosyl-L-methionine (SAM) to 7-keto-8-aminopelargonic acid (KAPA) to form 7,8-diaminopelargonic acid (DAPA). It is the only aminotransferase known to utilize SAM as an amino donor. The chain is Adenosylmethionine-8-amino-7-oxononanoate aminotransferase from Methanocaldococcus jannaschii (strain ATCC 43067 / DSM 2661 / JAL-1 / JCM 10045 / NBRC 100440) (Methanococcus jannaschii).